A 1645-amino-acid polypeptide reads, in one-letter code: Cortactin-binding protein 2 (1645 aa).

5 disordered regions span residues 1 to 28 (MATD…EAAK), 269 to 293 (LKRG…SVSI), 366 to 435 (IVSS…AALH), 451 to 478 (GNAN…SRDS), and 492 to 612 (ALSR…PPKP). Residues 119–276 (RKMQERMSTQ…EQLKRGNDSK (158 aa)) are a coiled coil. 2 stretches are compositionally biased toward polar residues: residues 407–417 (QTPTIAPQSHA) and 451–477 (GNAN…TSRD). At Arg-495 the chain carries Asymmetric dimethylarginine. Residues 580–590 (TMASPPSTLPQ) are compositionally biased toward polar residues. 6 ANK repeats span residues 706-736 (GRPT…DINY), 740-769 (DGHS…QVNA), 773-802 (NGFT…NINH), 806-835 (EGQT…DRSV), 839-868 (DGWT…PARR), and 909-939 (EGWT…EPER). The tract at residues 868 to 898 (RNSLHEEEPESGVFDLDQGEESPEGTSKPVI) is disordered. The tract at residues 1442–1479 (CSRKKGESGAWRKVSTSPRKKSGRFSPPSWSKPGPSEE) is disordered. Phosphoserine is present on Ser-1521. Residues 1551 to 1645 (DDLRSFDSPG…EINNNSKEEI (95 aa)) form a disordered region. Polar residues-rich tracts occupy residues 1558-1569 (SPGNSPAFSATV) and 1582-1597 (PFSS…SQSK). Residues 1620 to 1634 (SQNTKRSSSSSNTRQ) are compositionally biased toward low complexity. Positions 1635–1645 (IEINNNSKEEI) are enriched in polar residues.

Interacts with CTTN/cortactin SH3 domain. Interacts with STRN, STRN4/zinedin and MOB4/phocein; this interactions mediate the association with the STRIPAK core complex and may regulate dendritic spine distribution of the STRIPAK complex in hippocampal neurons. Activation of glutamate receptors weakens the interaction with STRN and STRN4.

Its subcellular location is the cytoplasm. It localises to the cell cortex. It is found in the cell projection. The protein resides in the dendritic spine. Regulates the dendritic spine distribution of CTTN/cortactin in hippocampal neurons, and thus controls dendritic spinogenesis and dendritic spine maintenance. Associates with the striatin-interacting phosphatase and kinase (STRIPAK) core complex to regulate dendritic spine distribution of the STRIPAK complex in hippocampal neurons. The protein is Cortactin-binding protein 2 (CTTNBP2) of Mustela putorius furo (European domestic ferret).